The following is a 620-amino-acid chain: MDSHTLLQALIYLGSAALIVPIAVRLGLGSVLGYLIAGCIIGPWGLRLVTDAESILHFAEIGVVLMLFVIGLELDPQRLWKLRASVFGGGALQMVVCGGLIGLFCMFLGLRWQVAELIGMTLALSSTAIAMQAMNERNLTVSQVGRSAFAVLLFQDIAAIPLVAMIPLLAASGASTTLGAFALSALKVAGALALVVLLGRYVTRPALRFVARSGLREVFSAVALFLVFGFGLLLEEVGLSMAMGAFLAGVLLASSEYRHALESDIEPFKGLLLGLFFIGVGMSIDFGTLVENPLRILLLLAGFLTIKIVMLWLVARPLGVPAKQRRWFAVLLGQGSEFAFVVFGAAQMAGVLEPEWAKALTLAVALSMAATPIFLVLLTRMEKTATGEAREADEIDEEQPRVIVAGFGRFGQIAGRLLLSSGVKMVVLDHDPDHIETLRKFGMKVFYGDATRMDLLESAGAAKAEVLINAIDDPQTNLQLSELVKSHFPHLQIIARARDVDHYIRLRQAGVAMPERETFEGALKSGRQALEALGLGRYEARERADLFRHFNTRMVEEMAKGENDPLSRAAAYKRTSAMLSEIITEDREHLSLIQRHGWQGTAEGKHSGEAADEPEVKPSI.

Transmembrane regions (helical) follow at residues 4 to 24, 26 to 46, 54 to 74, 90 to 110, 114 to 134, 149 to 169, 178 to 198, 218 to 238, 270 to 290, 294 to 314, 327 to 347, and 359 to 379; these read HTLL…PIAV, LGLG…PWGL, SILH…GLEL, GALQ…FLGL, VAEL…MQAM, FAVL…IPLL, LGAF…VVLL, VFSA…EEVG, GLLL…GTLV, LRIL…LWLV, WFAV…GAAQ, and ALTL…VLLT. Residues 399–518 form the RCK N-terminal domain; that stretch reads QPRVIVAGFG…AGVAMPERET (120 aa). Positions 599–620 are disordered; the sequence is QGTAEGKHSGEAADEPEVKPSI.

This sequence belongs to the monovalent cation:proton antiporter 2 (CPA2) transporter (TC 2.A.37) family. KefC subfamily. In terms of assembly, homodimer. Interacts with the regulatory subunit KefF.

The protein localises to the cell inner membrane. Pore-forming subunit of a potassium efflux system that confers protection against electrophiles. Catalyzes K(+)/H(+) antiport. This chain is Glutathione-regulated potassium-efflux system protein KefC, found in Salmonella schwarzengrund (strain CVM19633).